The chain runs to 366 residues: Protein-glutamate methylesterase/protein-glutamine glutaminase 2 (366 aa).

The region spanning 3-119 (RLLIADDSAL…SLELDRLRPL (117 aa)) is the Response regulatory domain. D53 is subject to 4-aspartylphosphate. The interval 149-168 (AASSPRAKAARRGAARQRAK) is disordered. Residues 156-166 (KAARRGAARQR) show a composition bias toward basic residues. The region spanning 171 to 363 (PAPGLVLIGT…AAVIEWGNAD (193 aa)) is the CheB-type methylesterase domain. Active-site residues include S181, H208, and D305.

It belongs to the CheB family. Phosphorylated by CheA. Phosphorylation of the N-terminal regulatory domain activates the methylesterase activity.

It localises to the cytoplasm. The catalysed reaction is [protein]-L-glutamate 5-O-methyl ester + H2O = L-glutamyl-[protein] + methanol + H(+). It carries out the reaction L-glutaminyl-[protein] + H2O = L-glutamyl-[protein] + NH4(+). In terms of biological role, involved in chemotaxis. Part of a chemotaxis signal transduction system that modulates chemotaxis in response to various stimuli. Catalyzes the demethylation of specific methylglutamate residues introduced into the chemoreceptors (methyl-accepting chemotaxis proteins or MCP) by CheR. Also mediates the irreversible deamidation of specific glutamine residues to glutamic acid. This chain is Protein-glutamate methylesterase/protein-glutamine glutaminase 2, found in Rhodopseudomonas palustris (strain BisB18).